Reading from the N-terminus, the 678-residue chain is ATP-dependent RNA helicase DHX58 (678 aa).

A Helicase ATP-binding domain is found at 11–188 (ILPALEGKNI…QGAIDHILQL (178 aa)). ATP is bound at residue 24–31 (LPTGAGKT). The DECH box signature appears at 131 to 134 (DECH). A Helicase C-terminal domain is found at 353–514 (MLERILLKQF…KAVAAVQKMD (162 aa)). A coiled-coil region spans residues 489–546 (EMKRELTNEALEVLMEKAVAAVQKMDPDEFKAKIRDLQQASLVKRAARAAHREIQQGQ). Positions 542-669 (IQQGQFLPEH…PVFDILQDCT (128 aa)) constitute an RLR CTR domain. Zn(2+) contacts are provided by Cys556, Cys559, Cys612, and Cys615. Positions 572 to 655 (VEGTHHVNVN…KIQAKKWSRV (84 aa)) are RNA-binding.

This sequence belongs to the helicase family. RLR subfamily. In terms of assembly, monomer in the absence of dsRNA. Homodimer in the presence of dsRNA. Interacts with RIGI (via CARD domain), MAVS/IPS1 and DDX60. Found in a complex with RIGI and IFIH1/MDA5. Interacts with ANKRD17. Directly interacts with ATG5 and ATG12, either as ATG5 and ATG12 monomers or as ATG12-ATG5 conjugates. As to expression, highly expressed in mammary tissues. Expressed in liver and testis. Expressed at lower level in spleen, embryo, mammary gland and breast tumors.

It localises to the cytoplasm. It catalyses the reaction ATP + H2O = ADP + phosphate + H(+). Acts as a regulator of RIGI and IFIH1/MDA5 mediated antiviral signaling. Cannot initiate antiviral signaling as it lacks the CARD domain required for activating MAVS/IPS1-dependent signaling events. Can have both negative and positive regulatory functions related to RIGI and IFIH1/MDA5 signaling and this role in regulating signaling may be complex and could probably depend on characteristics of the infecting virus or target cells, or both. Its inhibitory action on RIG-I signaling may involve the following mechanisms: competition with RIGI for binding to the viral RNA, binding to RIGI and inhibiting its dimerization and interaction with MAVS/IPS1, competing with IKBKE in its binding to MAVS/IPS1 thereby inhibiting activation of interferon regulatory factor 3 (IRF3). Its positive regulatory role may involve unwinding or stripping nucleoproteins of viral RNA thereby facilitating their recognition by RIGI and IFIH1/MDA5. Involved in the innate immune response to various RNA viruses and some DNA viruses such as poxviruses, and also to the bacterial pathogen Listeria monocytogenes. Can bind both ssRNA and dsRNA, with a higher affinity for dsRNA. Shows a preference to 5'-triphosphorylated RNA, although it can recognize RNA lacking a 5'-triphosphate. The polypeptide is ATP-dependent RNA helicase DHX58 (Mus musculus (Mouse)).